Here is a 185-residue protein sequence, read N- to C-terminus: Large ribosomal subunit protein bL25 (185 aa).

It belongs to the bacterial ribosomal protein bL25 family. CTC subfamily. In terms of assembly, part of the 50S ribosomal subunit; part of the 5S rRNA/L5/L18/L25 subcomplex. Contacts the 5S rRNA. Binds to the 5S rRNA independently of L5 and L18.

Its function is as follows. This is one of the proteins that binds to the 5S RNA in the ribosome where it forms part of the central protuberance. This chain is Large ribosomal subunit protein bL25, found in Chlamydia abortus (strain DSM 27085 / S26/3) (Chlamydophila abortus).